A 353-amino-acid chain; its full sequence is Methylthioribose-1-phosphate isomerase (353 aa).

Substrate is bound by residues 48–50, Arg94, and Gln201; that span reads RGA. Asp242 serves as the catalytic Proton donor. 252–253 lines the substrate pocket; sequence NK.

The protein belongs to the eIF-2B alpha/beta/delta subunits family. MtnA subfamily.

The enzyme catalyses 5-(methylsulfanyl)-alpha-D-ribose 1-phosphate = 5-(methylsulfanyl)-D-ribulose 1-phosphate. The protein operates within amino-acid biosynthesis; L-methionine biosynthesis via salvage pathway; L-methionine from S-methyl-5-thio-alpha-D-ribose 1-phosphate: step 1/6. Catalyzes the interconversion of methylthioribose-1-phosphate (MTR-1-P) into methylthioribulose-1-phosphate (MTRu-1-P). This is Methylthioribose-1-phosphate isomerase from Roseiflexus sp. (strain RS-1).